Reading from the N-terminus, the 66-residue chain is Cysteine proteinase inhibitor (66 aa).

A Secondary area of contact motif is present at residues 18–22 (QVVAG).

This sequence belongs to the cystatin family. Phytocystatin subfamily. In terms of tissue distribution, in tubers of untreated plants. After ABA treatment or mechanical wounding is mostly accumulated in leaves, to a lesser extent in stems, but not in roots.

In Solanum tuberosum (Potato), this protein is Cysteine proteinase inhibitor (CYS-PIN).